A 118-amino-acid chain; its full sequence is Large ribosomal subunit protein bL19 (118 aa).

This sequence belongs to the bacterial ribosomal protein bL19 family.

This protein is located at the 30S-50S ribosomal subunit interface and may play a role in the structure and function of the aminoacyl-tRNA binding site. The sequence is that of Large ribosomal subunit protein bL19 from Campylobacter lari (strain RM2100 / D67 / ATCC BAA-1060).